We begin with the raw amino-acid sequence, 139 residues long: 6,7-dimethyl-8-ribityllumazine synthase (139 aa).

5-amino-6-(D-ribitylamino)uracil contacts are provided by residues Phe-13, 45–47 (VFD), and 69–71 (AVI). 74 to 75 (AT) serves as a coordination point for (2S)-2-hydroxy-3-oxobutyl phosphate. His-77 (proton donor) is an active-site residue. A 5-amino-6-(D-ribitylamino)uracil-binding site is contributed by Leu-102. Arg-117 is a binding site for (2S)-2-hydroxy-3-oxobutyl phosphate.

The protein belongs to the DMRL synthase family.

The enzyme catalyses (2S)-2-hydroxy-3-oxobutyl phosphate + 5-amino-6-(D-ribitylamino)uracil = 6,7-dimethyl-8-(1-D-ribityl)lumazine + phosphate + 2 H2O + H(+). It participates in cofactor biosynthesis; riboflavin biosynthesis; riboflavin from 2-hydroxy-3-oxobutyl phosphate and 5-amino-6-(D-ribitylamino)uracil: step 1/2. Functionally, catalyzes the formation of 6,7-dimethyl-8-ribityllumazine by condensation of 5-amino-6-(D-ribitylamino)uracil with 3,4-dihydroxy-2-butanone 4-phosphate. This is the penultimate step in the biosynthesis of riboflavin. This is 6,7-dimethyl-8-ribityllumazine synthase from Methanothermobacter thermautotrophicus (strain ATCC 29096 / DSM 1053 / JCM 10044 / NBRC 100330 / Delta H) (Methanobacterium thermoautotrophicum).